Consider the following 25-residue polypeptide: Chrysophsin-2 (25 aa).

His-25 bears the Histidine amide mark.

Gill.

The protein resides in the secreted. In terms of biological role, has antibacterial activity against Gram-positive bacteria B.subtilis ATCC 6633, L.garvieae ATCC 49156 and S.iniae F-8502, and Gram-negative bacteria E.coli WT-2, V.anguillarum ATCC 19264, V.penaeicida KHA, V.harveyi ATCC 14126, V.vulnificus ATCC 33148 and A.salmonicida NCMB 1102. Has hemolytic activity against human red blood cells. Seems to disrupt the membranes by adopting an alpha helical conformation. May play a significant role in innate host defense. The chain is Chrysophsin-2 from Pagrus major (Red sea bream).